The primary structure comprises 1112 residues: DNA-directed RNA polymerase subunit beta (1112 aa).

The tract at residues Val-1087–Asp-1112 is disordered.

This sequence belongs to the RNA polymerase beta chain family. As to quaternary structure, in cyanobacteria the RNAP catalytic core is composed of 2 alpha, 1 beta, 1 beta', 1 gamma and 1 omega subunit. When a sigma factor is associated with the core the holoenzyme is formed, which can initiate transcription.

The catalysed reaction is RNA(n) + a ribonucleoside 5'-triphosphate = RNA(n+1) + diphosphate. DNA-dependent RNA polymerase catalyzes the transcription of DNA into RNA using the four ribonucleoside triphosphates as substrates. The sequence is that of DNA-directed RNA polymerase subunit beta from Gloeobacter violaceus (strain ATCC 29082 / PCC 7421).